Reading from the N-terminus, the 254-residue chain is tRNA pseudouridine synthase A (254 aa).

Asp-52 serves as the catalytic Nucleophile. Tyr-111 is a substrate binding site.

It belongs to the tRNA pseudouridine synthase TruA family. In terms of assembly, homodimer.

The catalysed reaction is uridine(38/39/40) in tRNA = pseudouridine(38/39/40) in tRNA. Formation of pseudouridine at positions 38, 39 and 40 in the anticodon stem and loop of transfer RNAs. In Rhizorhabdus wittichii (strain DSM 6014 / CCUG 31198 / JCM 15750 / NBRC 105917 / EY 4224 / RW1) (Sphingomonas wittichii), this protein is tRNA pseudouridine synthase A.